The following is a 237-amino-acid chain: Orotidine 5'-phosphate decarboxylase (237 aa).

Substrate is bound by residues Asp-10, Lys-32, 59 to 68 (DLKLHDIPNT), Thr-118, Arg-180, Gln-189, Gly-209, and Arg-210. The active-site Proton donor is the Lys-61.

It belongs to the OMP decarboxylase family. Type 1 subfamily. As to quaternary structure, homodimer.

It catalyses the reaction orotidine 5'-phosphate + H(+) = UMP + CO2. Its pathway is pyrimidine metabolism; UMP biosynthesis via de novo pathway; UMP from orotate: step 2/2. Functionally, catalyzes the decarboxylation of orotidine 5'-monophosphate (OMP) to uridine 5'-monophosphate (UMP). The sequence is that of Orotidine 5'-phosphate decarboxylase from Fusobacterium nucleatum subsp. nucleatum (strain ATCC 25586 / DSM 15643 / BCRC 10681 / CIP 101130 / JCM 8532 / KCTC 2640 / LMG 13131 / VPI 4355).